The primary structure comprises 862 residues: MGAPALLWPPLLLPLLTVLFGHLPGTLAQAQVCSANQTVFTMNENTTVSGPLADIFVPEDQYVTLGQLSTPNAFKVEGNKLFLIVTPDYEENSLLEAVLECKRGDTLVTQFRVFVAVLDINDNAPEFPFTIKEYNVSEDTRVNTIVIPETELKATDADKDDILVYTLQEVTPNASKFFSLVGINSPALKLDQTLDYYKSPNMTFRLLARDTREENVIPSHTATATVVLNVLPADLRTPWFLPCSFTDDYFCIQAQYHTVIPTGHKLPSPLILSPGPIYAVDGDQAINQPIVYSIMMGNTDDTFIINKDDGNLTMAKSIPSPMTFTLVVRAEQADMARYSVTQAVVEARDVTGNPLQFSQSLYFGTVVLGSEAGTAVKDKTFPSEILRIQAQYLGFPDLNSAVTYQVTNSSEFIMNKDILLTTVPMETERTIRIEVEANNTVTKDIATTIVEIQVSEREPPSTESPTPPEAGGTTGPSSNTTLETPSTSGTSQGPATTSSGGSAGPFPPAGTTLSPLTSAPTVPGGSPTLGISTSPQTATPGGDATQTPKPGTSQPMVPTPGASTSSQPATPSGSSTQTPKPGTSQPMVPTPGASTSSQPATPSGSSTQTPRPGTSQPMVPTPGASTSSQPATPSGSTQTPKPGTSQPTTTGPISGVGELGDGQRFSTVDMAVLGGVLGALLLLALIFLIILIHKHYRHRFTCCSGKAKEPQPSGYDNLTFLPDNKAKWSPTSNRKPEPGPEPVQPPLRPPSPMSSSPTPPSSMPPSPQPKASGSPKTVQAGDSPSAVRSILTKERRPEGEGGYKAVWFGKDIGAEADVVVLNEPTADVDSASASGSEGSDDDDDPDQKKSLRLGAVADNTYV.

Residues 1-28 form the signal peptide; the sequence is MGAPALLWPPLLLPLLTVLFGHLPGTLA. Topologically, residues 29 to 671 are extracellular; sequence QAQVCSANQT…GQRFSTVDMA (643 aa). N-linked (GlcNAc...) asparagine glycans are attached at residues asparagine 36, asparagine 45, asparagine 135, asparagine 173, asparagine 201, asparagine 311, asparagine 408, asparagine 438, and asparagine 479. Cadherin domains lie at 40-127, 128-240, 252-357, and 358-462; these read FTMN…APEF, PFTI…TPWF, IQAQ…PLQF, and SQSL…PPST. The segment at 452–658 is disordered; the sequence is IQVSEREPPS…TTGPISGVGE (207 aa). The segment covering 461–500 has biased composition (low complexity); that stretch reads STESPTPPEAGGTTGPSSNTTLETPSTSGTSQGPATTSSG. Residues 529 to 652 show a composition bias toward polar residues; the sequence is LGISTSPQTA…GTSQPTTTGP (124 aa). Repeat copies occupy residues 545–575, 576–606, and 607–636. The 4 X 31 AA approximate tandem repeats stretch occupies residues 545-648; the sequence is TQTPKPGTSQ…TPKPGTSQPT (104 aa). The 4; truncated repeat unit spans residues 637 to 648; that stretch reads TQTPKPGTSQPT. Residues 672-692 form a helical membrane-spanning segment; that stretch reads VLGGVLGALLLLALIFLIILI. The Cytoplasmic segment spans residues 693–862; sequence HKHYRHRFTC…LGAVADNTYV (170 aa). The interval 693 to 862 is mediates interaction with USH1C and MYO7B and is required for proper localization to microvilli tips and function in microvilli organization; sequence HKHYRHRFTC…LGAVADNTYV (170 aa). Disordered regions lie at residues 706-803 and 821-862; these read KAKE…EGGY and LNEP…NTYV. Phosphoserine occurs at positions 729, 751, and 755. Positions 739 to 768 are enriched in pro residues; the sequence is GPEPVQPPLRPPSPMSSSPTPPSSMPPSPQ. A Phosphothreonine modification is found at threonine 758. A phosphoserine mark is found at serine 766 and serine 783. A compositionally biased stretch (basic and acidic residues) spans 791–801; the sequence is LTKERRPEGEG. Threonine 825 is modified (phosphothreonine). The span at 827–837 shows a compositional bias: low complexity; it reads DVDSASASGSE. Residues serine 832, serine 834, and serine 836 each carry the phosphoserine modification.

Part of the IMAC/intermicrovillar adhesion complex/intermicrovillar tip-link complex composed of ANKS4B, MYO7B, USH1C, CDHR2 and CDHR5. Interacts (via cytoplasmic domain) with USH1C and MYO7B; required for proper localization of CDHR5 to microvilli tips and its function in brush border differentiation. Post-translationally, N- and O-glycosylated. In terms of tissue distribution, expressed predominantly in kidney. Also detected in lung and small intestine.

Its subcellular location is the apical cell membrane. It localises to the cell projection. The protein localises to the microvillus membrane. Its function is as follows. Intermicrovillar adhesion molecule that forms, via its extracellular domain, calcium-dependent heterophilic complexes with CDHR2 on adjacent microvilli. Thereby, controls the packing of microvilli at the apical membrane of epithelial cells. Through its cytoplasmic domain, interacts with microvillus cytoplasmic proteins to form the intermicrovillar adhesion complex/IMAC. This complex plays a central role in microvilli and epithelial brush border differentiation. The sequence is that of Cadherin-related family member 5 from Rattus norvegicus (Rat).